We begin with the raw amino-acid sequence, 44 residues long: Photosystem I reaction center subunit IX (44 aa).

A helical membrane pass occupies residues 7–27 (YLSVAPVASTLWFVALAGLLI).

The protein belongs to the PsaJ family.

Its subcellular location is the plastid. It localises to the chloroplast thylakoid membrane. Its function is as follows. May help in the organization of the PsaE and PsaF subunits. The polypeptide is Photosystem I reaction center subunit IX (Cicer arietinum (Chickpea)).